Reading from the N-terminus, the 314-residue chain is WD repeat domain-containing protein 83 (314 aa).

7 WD repeats span residues 23 to 62 (CNQG…LLKT), 65 to 104 (GHGY…VVRK), 107 to 146 (GHAG…PEAI), 151 to 188 (EAKD…MCAD), 189 to 228 (YLGS…LLGE), 231 to 272 (GHQN…LVLK), and 275 to 313 (VGKA…EEGG).

This sequence belongs to the WD repeat MORG1 family.

The protein localises to the cytoplasm. Molecular scaffold protein for various multimeric protein complexes. Acts as a module in the assembly of a multicomponent scaffold for the ERK pathway, linking ERK responses to specific agonists. Also involved in response to hypoxia by acting as a negative regulator of HIF1A/HIF-1-alpha. The polypeptide is WD repeat domain-containing protein 83 (wdr83) (Xenopus tropicalis (Western clawed frog)).